Consider the following 89-residue polypeptide: Large ribosomal subunit protein eL43 (89 aa).

Zn(2+) is bound by residues C38, C41, C56, and C59. The C4-type zinc-finger motif lies at 38-59; the sequence is CPSCDRPGVKRESRGIWKCRKC.

Belongs to the eukaryotic ribosomal protein eL43 family. Putative zinc-binding subfamily. As to quaternary structure, part of the 50S ribosomal subunit. Requires Zn(2+) as cofactor.

Functionally, binds to the 23S rRNA. The sequence is that of Large ribosomal subunit protein eL43 from Methanothermobacter thermautotrophicus (strain ATCC 29096 / DSM 1053 / JCM 10044 / NBRC 100330 / Delta H) (Methanobacterium thermoautotrophicum).